The primary structure comprises 76 residues: Kappa-actitoxin-Avd4a (76 aa).

An N-terminal signal peptide occupies residues 1–19; sequence MNKALFLCLVVLCAAVVFA. A propeptide spanning residues 20-31 is cleaved from the precursor; it reads AEDLQKAKHAPF. 3 cysteine pairs are disulfide-bonded: Cys37–Cys72, Cys39–Cys65, and Cys55–Cys73.

Belongs to the sea anemone type 3 (BDS) potassium channel toxin family. In terms of tissue distribution, highly expressed in the ectodermal tissue from the distal and proximal tentacles, body wall, and oral disk.

It localises to the secreted. Its subcellular location is the nematocyst. Functionally, acts as a gating modifier on both Kv and Nav ion channels, and also acts on blood pressure. Voltage-dependently inhibits voltage-gated potassium channels Kv3 (Kv3.1/KCNC1, Kv3.2/KCNC2 and Kv3.4/KCNC4) and slows inactivation of the voltage-gated sodium channel Nav1.7/SCN9A. Inhibits all Kv3.1, Kv3.2 and Kv3.4 by about 50% when tested at a voltage of +40 mV (45%, 48% and 56%, respectively). May act by binding residues in voltage-sensing domains S3b and S4 of Kv3. On sodium channels, tests have been done on human Nav1.7/SCN9A (expressed in HEK293 cells) (EC(50)=3 nM) and rat SCG neurons that mostly carry Nav1.7 channels (EC(50)=300 nM). This toxin also reduces blood pressure. The chain is Kappa-actitoxin-Avd4a from Anemonia viridis (Snakelocks anemone).